A 110-amino-acid polypeptide reads, in one-letter code: uncharacterized protein (110 aa).

The tract at residues 85–110 (ARKAERPSQGGKDYNGTAKSAQSTTV) is disordered. Polar residues predominate over residues 101-110 (TAKSAQSTTV).

This is an uncharacterized protein from Saccharomyces cerevisiae (strain ATCC 204508 / S288c) (Baker's yeast).